Reading from the N-terminus, the 893-residue chain is Dystroglycan 1 (893 aa).

The first 27 residues, 1-27 (MSVDNWLLHPLWGQTFLLLLSVAVAQA), serve as a signal peptide directing secretion. Positions 28 to 406 (HWPSEPSEAV…GQIRPTLTIP (379 aa)) are required for laminin recognition. Residues 47–69 (SMHSVLSDFQEAVPTVVGIPDGT) are O-glycosylated at one site. N-linked (GlcNAc...) asparagine glycosylation occurs at Asn-139. A disulfide bridge links Cys-180 with Cys-262. The mucin-like domain stretch occupies residues 314-483 (ATPTPVTAIG…PPTRIRTTTS (170 aa)). Residues Thr-315, Thr-317, and Thr-377 are each glycosylated (O-linked (Man6P...) threonine). The segment at 379 to 498 (TLGPIQPTRV…GEPNQRPELK (120 aa)) is disordered. Positions 409–445 (VEPTAVITPPTTTTKKPRVSTPKPATPSTDSSTTTTR) are enriched in low complexity. Residues 461–483 (TTKAPITRLETASPPTRIRTTTS) are O-glycosylated at seven sites with GalNAc. The Peptidase S72 domain maps to 601–710 (KAPARFKARL…LSIAVTGSGS (110 aa)). N-linked (GlcNAc...) asparagine glycans are attached at residues Asn-639, Asn-647, and Asn-659. Residues 652 to 751 (SIVVEWTNNT…SSEDDVYLHT (100 aa)) are Extracellular-facing. A disulfide bridge links Cys-667 with Cys-711. The interval 722–744 (PSPGSSAAPATEVPDRDPEKSSE) is disordered. A compositionally biased stretch (basic and acidic residues) spans 734-744 (VPDRDPEKSSE). Residues 752-772 (VIPAVVVAAILLIAGIIAMIC) traverse the membrane as a helical segment. The Cytoplasmic portion of the chain corresponds to 773–893 (YRKKRKGKLT…YRSPPPYVPP (121 aa)). The Nuclear localization signal motif lies at 774 to 780 (RKKRKGK). The residue at position 788 (Thr-788) is a Phosphothreonine. The tract at residues 817–893 (LQEEKAPLPP…YRSPPPYVPP (77 aa)) is required for interaction with CAV3. The tract at residues 821–893 (KAPLPPPEYP…YRSPPPYVPP (73 aa)) is disordered. Positions 830-844 (PNQSMPETTPLNQDT) are enriched in polar residues. A compositionally biased stretch (pro residues) spans 857–868 (NAPPYQPPPPFT). Residues 878 to 893 (PKNMTPYRSPPPYVPP) are required for binding DMD and UTRN. The short motif at 887 to 890 (PPPY) is the PPXY motif element. Tyr-890 carries the post-translational modification Phosphotyrosine; by SRC.

In terms of assembly, monomer. Heterodimer of alpha- and beta-dystroglycan subunits which are the central components of the dystrophin-glycoprotein complex. This complex then can form a dystrophin-associated glycoprotein complex (DGC) which is composed of three subcomplexes: a cytoplasmic complex comprised of DMD (or UTRN), DTNA and a number of syntrophins, such as SNTB1, SNTB2, SNTG1 and SNTG2, the transmembrane dystroglycan complex, and the sarcoglycan-sarcospan complex. Interacts (via the N-terminal of alphaDAG1) with LARGE1; the interaction enhances laminin binding. Interacts with SGCD. Interacts with AGR2 and AGR3. Interacts (betaDAG1) with DMD; the interaction is inhibited by phosphorylation on the PPXY motif. Interacts (betaDAG1, via its PPXY motif) with UTRN (via its WWW and ZZ domains); the interaction is inhibited by phosphorylation on the PPXY motif. Interacts (betaDAG1, via its phosphorylated PPXY motif) with the SH2 domain-containing proteins, FYN, CSK, NCK and SHC. Interacts (betaDAG1) with CAV3 (via a central WW-like domain); the interaction disrupts the binding of DMD. BetaDAG1 directly interacts with ANK3, but not with ANK2; this interaction does not interfere with DMD-binding and is required for retention at costameres. Identified in a dystroglycan complex that contains at least PRX, DRP2, UTRN, DMD and DAG1. Interacts with POMGNT1. BetaDAG1 interacts with CD93. O-glycosylated. POMGNT1 catalyzes the initial addition of N-acetylglucosamine, giving rise to the GlcNAc(beta1-2)Man(alpha1-)O-Ser/Thr moiety and thus providing the necessary basis for the addition of further carbohydrate moieties. Heavily O-glycosylated comprising of up to two thirds of its mass and the carbohydrate composition differs depending on tissue type. Mucin-type O-glycosylation is important for ligand binding activity. O-mannosylation is found in high abundance in both brain and muscle where the most abundant glycan is Sia-alpha-2-3-Gal-beta-1-4-Glc-NAc-beta-1-2-Man. In muscle, glycosylation on Thr-315, Thr-317, Thr-379 by a phosphorylated O-mannosyl glycan with the structure 2-(N-acetylamido)-2-deoxygalactosyl-beta-1,3-2-(N-acetylamido)-2-deoxyglucosyl-beta-1,4-6-phosphomannose is mediated by like-acetylglucosaminyltransferase (LARGE1) protein amd is required for laminin binding. O-glycosylated in the N-terminal region with a core 1 or possibly core 8 glycan. The brain form displays a unique glycosylation pattern which is absent in other tissues; this form shows enhanced binding to laminin LAMA5 compared to the skeletal muscle form. In terms of processing, N-glycosylated. Post-translationally, autolytic cleavage produces the alpha and beta subunits. In cutaneous cells, as well as in certain pathological conditions, shedding of beta-dystroglycan can occur releasing a peptide of about 30 kDa. SRC-mediated phosphorylation of the PPXY motif of the beta subunit recruits SH2 domain-containing proteins, but inhibits binding to WWW domain-containing proteins, DMD and UTRN. This phosphorylation also inhibits nuclear entry. In terms of tissue distribution, detected in brain and kidney (at protein level). Detected in sciatic nerve (at protein level). Expressed in neurons and muscle cells (at protein level). Expressed in a variety of tissues. In brain, expressed in the hippocampal formation, the olfactory bulb, the cerebellum and the thalamus. In the peripheral nerve system, expressed in Schwann cells.

Its subcellular location is the secreted. The protein resides in the extracellular space. It is found in the cell membrane. It localises to the cytoplasm. The protein localises to the cytoskeleton. Its subcellular location is the nucleus. The protein resides in the nucleoplasm. It is found in the sarcolemma. It localises to the postsynaptic cell membrane. Functionally, the dystroglycan complex is involved in a number of processes including laminin and basement membrane assembly, sarcolemmal stability, cell survival, peripheral nerve myelination, nodal structure, cell migration, and epithelial polarization. Its function is as follows. Extracellular peripheral glycoprotein that acts as a receptor for extracellular matrix proteins containing laminin-G domains, and for certain adenoviruses. Receptor for laminin-2 (LAMA2) and agrin in peripheral nerve Schwann cells. Also acts as a receptor for laminin LAMA5. Transmembrane protein that plays important roles in connecting the extracellular matrix to the cytoskeleton. Acts as a cell adhesion receptor in both muscle and non-muscle tissues. Receptor for both DMD and UTRN and, through these interactions, scaffolds axin to the cytoskeleton. Also functions in cell adhesion-mediated signaling and implicated in cell polarity. The sequence is that of Dystroglycan 1 from Mus musculus (Mouse).